A 235-amino-acid polypeptide reads, in one-letter code: Transmembrane emp24 domain-containing protein 9 (235 aa).

The N-terminal stretch at 1-37 (MAAVRGVRVVGTSPGLLLGRGMRAFLLLLCLAARGGA) is a signal peptide. The Lumenal segment spans residues 38–202 (LYFHIGETEK…RQTSESTNQR (165 aa)). The region spanning 47–145 (KKCFIEEIPD…MLRVHLDIQV (99 aa)) is the GOLD domain. The tract at residues 121 to 160 (CLHSNSTKFSLFAGGMLRVHLDIQVGEHANDYAEIAAKDK) is required for interaction with STX17. Residue asparagine 125 is glycosylated (N-linked (GlcNAc...) asparagine). A coiled-coil region spans residues 154-184 (EIAAKDKLSELQLRVRQLVEQVEQIQKEQNY). Lysine 160 is modified (N6-acetyllysine). The chain crosses the membrane as a helical span at residues 203–222 (VLWWSILQTLILVAIGVWQM). The Cytoplasmic segment spans residues 223-235 (RHLKSFFEAKKLV). A COPII vesicle coat-binding motif is present at residues 228 to 229 (FF). Residues 228 to 235 (FFEAKKLV) carry the COPI vesicle coat-binding motif.

This sequence belongs to the EMP24/GP25L family. In terms of assembly, monomer and homodimer in endoplasmic reticulum. Predominantly monomeric and to lesser extent homodimeric in endoplasmic reticulum-Golgi intermediate compartment and cis-Golgi network. Probably oligomerizes with other members of the EMP24/GP25L family such as TMED2, TMED7 and TMED10. Interacts with TMED5. Interacts (via C-terminus) with COPG1; the interaction involves dimeric TMED9. Interacts with PTPN2 and SPAST. Interacts with STX17; the interaction is direct. N-linked glycosylated containing high mannose.

Its subcellular location is the endoplasmic reticulum membrane. It localises to the golgi apparatus. The protein localises to the cis-Golgi network membrane. The protein resides in the endoplasmic reticulum-Golgi intermediate compartment membrane. It is found in the trans-Golgi network membrane. Functionally, appears to be involved in vesicular protein trafficking, mainly in the early secretory pathway. In COPI vesicle-mediated retrograde transport involved in the coatomer recruitment to membranes of the early secretory pathway. Increases coatomer-dependent activity of ARFGAP2. Thought to play a crucial role in the specific retention of p24 complexes in cis-Golgi membranes; specifically contributes to the coupled localization of TMED2 and TMED10 in the cis-Golgi network. May be involved in organization of intracellular membranes, such as of the ER-Golgi intermediate compartment and the Golgi apparatus. Involved in ER localization of PTPN2. In Rattus norvegicus (Rat), this protein is Transmembrane emp24 domain-containing protein 9 (Tmed9).